The primary structure comprises 219 residues: UPF0502 protein Ppro_2903 (219 aa).

Belongs to the UPF0502 family.

The chain is UPF0502 protein Ppro_2903 from Pelobacter propionicus (strain DSM 2379 / NBRC 103807 / OttBd1).